Reading from the N-terminus, the 860-residue chain is Leucine--tRNA ligase (860 aa).

The 'HIGH' region motif lies at 42 to 52 (PYPSGRLHMGH). The 'KMSKS' region signature appears at 619–623 (KMSKS). Lysine 622 serves as a coordination point for ATP.

This sequence belongs to the class-I aminoacyl-tRNA synthetase family.

It localises to the cytoplasm. It catalyses the reaction tRNA(Leu) + L-leucine + ATP = L-leucyl-tRNA(Leu) + AMP + diphosphate. This Pasteurella multocida (strain Pm70) protein is Leucine--tRNA ligase.